A 377-amino-acid polypeptide reads, in one-letter code: Presenilin-associated rhomboid-like protein, mitochondrial (377 aa).

A mitochondrion-targeting transit peptide spans Met-1–Gly-52. The Mitochondrial matrix portion of the chain corresponds to Phe-53–Pro-99. Residues Ser-65 and Ser-68 each carry the phosphoserine modification. Residues Leu-100 to Tyr-119 form a helical membrane-spanning segment. The Mitochondrial intermembrane portion of the chain corresponds to Glu-120 to Arg-165. Residues Thr-166 to Ser-185 form a helical membrane-spanning segment. At Leu-186–Ser-205 the chain is on the mitochondrial matrix side. A helical transmembrane segment spans residues Pro-206–Trp-228. Topologically, residues Ser-229–Gln-242 are mitochondrial intermembrane. Residues Phe-243–Val-260 form a helical membrane-spanning segment. Residues Cys-261–Pro-270 lie on the Mitochondrial matrix side of the membrane. Residues Ser-271–Thr-287 traverse the membrane as a helical segment. Ser-275 functions as the Nucleophile in the catalytic mechanism. At Lys-288–Arg-293 the chain is on the mitochondrial intermembrane side. The helical transmembrane segment at Leu-294–Met-316 threads the bilayer. The Mitochondrial matrix portion of the chain corresponds to Asp-317–His-330. Residues Ala-331–Trp-352 traverse the membrane as a helical segment. Residue His-333 is part of the active site. Residues Lys-353 to Lys-377 are Mitochondrial intermembrane-facing.

It belongs to the peptidase S54 family. As to quaternary structure, interacts with PSEN1 and PSEN2. Binds OPA1. Post-translationally, P-beta is proteolytically processed (beta-cleavage) in a PARL-dependent manner.

It is found in the mitochondrion inner membrane. The protein localises to the nucleus. The enzyme catalyses Cleaves type-1 transmembrane domains using a catalytic dyad composed of serine and histidine that are contributed by different transmembrane domains.. Its function is as follows. Required for the control of apoptosis during postnatal growth. Essential for proteolytic processing of an antiapoptotic form of OPA1 which prevents the release of mitochondrial cytochrome c in response to intrinsic apoptotic signals. Required for the maturation of PINK1 into its 52kDa mature form after its cleavage by mitochondrial-processing peptidase (MPP). Promotes cleavage of serine/threonine-protein phosphatase PGAM5 in damaged mitochondria in response to loss of mitochondrial membrane potential. Mediates differential cleavage of PINK1 and PGAM5 depending on the health status of mitochondria, disassociating from PINK1 and associating with PGAM5 in response to mitochondrial membrane potential loss. Required for processing of CLPB into a form with higher protein disaggregase activity by removing an autoinhibitory N-terminal peptide. Promotes processing of DIABLO/SMAC in the mitochondrion which is required for DIABLO apoptotic activity. Also required for cleavage of STARD7 and TTC19. Promotes changes in mitochondria morphology regulated by phosphorylation of P-beta domain. In Bos taurus (Bovine), this protein is Presenilin-associated rhomboid-like protein, mitochondrial (PARL).